A 350-amino-acid chain; its full sequence is tRNA uridine(34) hydroxylase (350 aa).

In terms of domain architecture, Rhodanese spans 146-240; that stretch reads DDPDALFIDM…YARKARDQGL (95 aa). C200 (cysteine persulfide intermediate) is an active-site residue.

This sequence belongs to the TrhO family.

It catalyses the reaction uridine(34) in tRNA + AH2 + O2 = 5-hydroxyuridine(34) in tRNA + A + H2O. Functionally, catalyzes oxygen-dependent 5-hydroxyuridine (ho5U) modification at position 34 in tRNAs, the first step in 5-carboxymethoxyuridine (cmo5U) biosynthesis. May be part of an alternate pathway, which is able to bypass cmo5U biogenesis in a subset of tRNAs under aerobic conditions. This is tRNA uridine(34) hydroxylase from Escherichia coli O6:K15:H31 (strain 536 / UPEC).